Here is a 312-residue protein sequence, read N- to C-terminus: 4-diphosphocytidyl-2-C-methyl-D-erythritol kinase (312 aa).

Lysine 10 is a catalytic residue. 105–115 (PVAGGMAGGSA) provides a ligand contact to ATP. Residue aspartate 146 is part of the active site.

It belongs to the GHMP kinase family. IspE subfamily.

It carries out the reaction 4-CDP-2-C-methyl-D-erythritol + ATP = 4-CDP-2-C-methyl-D-erythritol 2-phosphate + ADP + H(+). Its pathway is isoprenoid biosynthesis; isopentenyl diphosphate biosynthesis via DXP pathway; isopentenyl diphosphate from 1-deoxy-D-xylulose 5-phosphate: step 3/6. In terms of biological role, catalyzes the phosphorylation of the position 2 hydroxy group of 4-diphosphocytidyl-2C-methyl-D-erythritol. This is 4-diphosphocytidyl-2-C-methyl-D-erythritol kinase from Corynebacterium glutamicum (strain R).